The primary structure comprises 101 residues: Urease subunit beta (101 aa).

It belongs to the urease beta subunit family. In terms of assembly, heterotrimer of UreA (gamma), UreB (beta) and UreC (alpha) subunits. Three heterotrimers associate to form the active enzyme.

It localises to the cytoplasm. It carries out the reaction urea + 2 H2O + H(+) = hydrogencarbonate + 2 NH4(+). It functions in the pathway nitrogen metabolism; urea degradation; CO(2) and NH(3) from urea (urease route): step 1/1. The chain is Urease subunit beta from Paraburkholderia phymatum (strain DSM 17167 / CIP 108236 / LMG 21445 / STM815) (Burkholderia phymatum).